The following is a 524-amino-acid chain: Chromosomal replication initiator protein DnaA (524 aa).

The interval 1-72 (MNDFWQHCSA…DLARDFWNAP (72 aa)) is domain I, interacts with DnaA modulators. The tract at residues 72 to 187 (PIEVQFVLDP…GEADSMYERS (116 aa)) is domain II. The interval 188–404 (KLNPVLTFDN…GALRKILAYS (217 aa)) is domain III, AAA+ region. ATP contacts are provided by Gly-232, Gly-234, Lys-235, and Thr-236. The tract at residues 405–524 (KFHGREISIE…LHVLEQTLKG (120 aa)) is domain IV, binds dsDNA.

Belongs to the DnaA family. In terms of assembly, oligomerizes as a right-handed, spiral filament on DNA at oriC.

The protein resides in the cytoplasm. Plays an essential role in the initiation and regulation of chromosomal replication. ATP-DnaA binds to the origin of replication (oriC) to initiate formation of the DNA replication initiation complex once per cell cycle. Binds the DnaA box (a 9 base pair repeat at the origin) and separates the double-stranded (ds)DNA. Forms a right-handed helical filament on oriC DNA; dsDNA binds to the exterior of the filament while single-stranded (ss)DNA is stabiized in the filament's interior. The ATP-DnaA-oriC complex binds and stabilizes one strand of the AT-rich DNA unwinding element (DUE), permitting loading of DNA polymerase. After initiation quickly degrades to an ADP-DnaA complex that is not apt for DNA replication. Binds acidic phospholipids. The chain is Chromosomal replication initiator protein DnaA from Burkholderia multivorans (strain ATCC 17616 / 249).